The following is a 216-amino-acid chain: ATP phosphoribosyltransferase (216 aa).

This sequence belongs to the ATP phosphoribosyltransferase family. Short subfamily. Heteromultimer composed of HisG and HisZ subunits.

The protein resides in the cytoplasm. It carries out the reaction 1-(5-phospho-beta-D-ribosyl)-ATP + diphosphate = 5-phospho-alpha-D-ribose 1-diphosphate + ATP. The protein operates within amino-acid biosynthesis; L-histidine biosynthesis; L-histidine from 5-phospho-alpha-D-ribose 1-diphosphate: step 1/9. Functionally, catalyzes the condensation of ATP and 5-phosphoribose 1-diphosphate to form N'-(5'-phosphoribosyl)-ATP (PR-ATP). Has a crucial role in the pathway because the rate of histidine biosynthesis seems to be controlled primarily by regulation of HisG enzymatic activity. In Streptococcus thermophilus (strain ATCC BAA-491 / LMD-9), this protein is ATP phosphoribosyltransferase.